The following is a 530-amino-acid chain: Bifunctional purine biosynthesis protein PurH (530 aa).

In terms of domain architecture, MGS-like spans 1–147 (MPSIKRALIS…KNWKHVAIVT (147 aa)).

Belongs to the PurH family.

It carries out the reaction (6R)-10-formyltetrahydrofolate + 5-amino-1-(5-phospho-beta-D-ribosyl)imidazole-4-carboxamide = 5-formamido-1-(5-phospho-D-ribosyl)imidazole-4-carboxamide + (6S)-5,6,7,8-tetrahydrofolate. It catalyses the reaction IMP + H2O = 5-formamido-1-(5-phospho-D-ribosyl)imidazole-4-carboxamide. Its pathway is purine metabolism; IMP biosynthesis via de novo pathway; 5-formamido-1-(5-phospho-D-ribosyl)imidazole-4-carboxamide from 5-amino-1-(5-phospho-D-ribosyl)imidazole-4-carboxamide (10-formyl THF route): step 1/1. It functions in the pathway purine metabolism; IMP biosynthesis via de novo pathway; IMP from 5-formamido-1-(5-phospho-D-ribosyl)imidazole-4-carboxamide: step 1/1. In Neisseria meningitidis serogroup A / serotype 4A (strain DSM 15465 / Z2491), this protein is Bifunctional purine biosynthesis protein PurH.